Here is a 351-residue protein sequence, read N- to C-terminus: UDP-3-O-acylglucosamine N-acyltransferase (351 aa).

The active-site Proton acceptor is His-257.

It belongs to the transferase hexapeptide repeat family. LpxD subfamily. In terms of assembly, homotrimer.

The catalysed reaction is a UDP-3-O-[(3R)-3-hydroxyacyl]-alpha-D-glucosamine + a (3R)-hydroxyacyl-[ACP] = a UDP-2-N,3-O-bis[(3R)-3-hydroxyacyl]-alpha-D-glucosamine + holo-[ACP] + H(+). The protein operates within bacterial outer membrane biogenesis; LPS lipid A biosynthesis. In terms of biological role, catalyzes the N-acylation of UDP-3-O-acylglucosamine using 3-hydroxyacyl-ACP as the acyl donor. Is involved in the biosynthesis of lipid A, a phosphorylated glycolipid that anchors the lipopolysaccharide to the outer membrane of the cell. The sequence is that of UDP-3-O-acylglucosamine N-acyltransferase from Methylorubrum extorquens (strain PA1) (Methylobacterium extorquens).